Reading from the N-terminus, the 370-residue chain is Protein FAM110B (370 aa).

2 disordered regions span residues 127–151 (SSEG…RSEA) and 237–256 (KSPE…RPSL). Phosphoserine is present on residues S238 and S301. The interval 317-337 (DCEQSQDSNSDLRNDDSANDR) is disordered. Residues 326–335 (SDLRNDDSAN) show a composition bias toward basic and acidic residues.

The protein belongs to the FAM110 family.

The protein localises to the cytoplasm. The protein resides in the cytoskeleton. It localises to the microtubule organizing center. Its subcellular location is the centrosome. This is Protein FAM110B (FAM110B) from Pongo abelii (Sumatran orangutan).